Reading from the N-terminus, the 151-residue chain is Transcriptional repressor NrdR (151 aa).

A zinc finger spans residues 3-34 (CPFCHNDQSRVIDSRVIDSGSAIRRRRECTQC). In terms of domain architecture, ATP-cone spans 46–136 (LLVVKRNGLT…VYKSFESADD (91 aa)).

Belongs to the NrdR family. The cofactor is Zn(2+).

Functionally, negatively regulates transcription of bacterial ribonucleotide reductase nrd genes and operons by binding to NrdR-boxes. The protein is Transcriptional repressor NrdR of Corynebacterium diphtheriae (strain ATCC 700971 / NCTC 13129 / Biotype gravis).